Consider the following 661-residue polypeptide: Heme transporter BhuA (661 aa).

An N-terminal signal peptide occupies residues 1-23; sequence MKFTRTLVLVSTSLLATVATSQA. Residues 48–159 form the TBDR plug domain; the sequence is KDNIEATGGT…AAGAIRYETV (112 aa). Positions 170-661 constitute a TBDR beta-barrel domain; it reads TFGARIIGSY…TFTFQTAFKF (492 aa).

The protein belongs to the TonB-dependent receptor family.

It localises to the cell outer membrane. Functionally, heme transporter playing an important role in stationary-phase iron acquisition and required for maintenance of chronic infection in mice. In Brucella abortus (strain 2308), this protein is Heme transporter BhuA (bhuA).